The chain runs to 245 residues: UDP-2,3-diacylglucosamine hydrolase (245 aa).

Mn(2+) is bound by residues Asp8, His10, Asp41, Asn80, and His115. Residue 80–81 (NR) coordinates substrate. The substrate site is built by Asp123, Ser161, Lys165, Lys168, and His196. Mn(2+) contacts are provided by His196 and His198.

It belongs to the LpxH family. Mn(2+) serves as cofactor.

It is found in the cell inner membrane. It carries out the reaction UDP-2-N,3-O-bis[(3R)-3-hydroxytetradecanoyl]-alpha-D-glucosamine + H2O = 2-N,3-O-bis[(3R)-3-hydroxytetradecanoyl]-alpha-D-glucosaminyl 1-phosphate + UMP + 2 H(+). The protein operates within glycolipid biosynthesis; lipid IV(A) biosynthesis; lipid IV(A) from (3R)-3-hydroxytetradecanoyl-[acyl-carrier-protein] and UDP-N-acetyl-alpha-D-glucosamine: step 4/6. Its function is as follows. Hydrolyzes the pyrophosphate bond of UDP-2,3-diacylglucosamine to yield 2,3-diacylglucosamine 1-phosphate (lipid X) and UMP by catalyzing the attack of water at the alpha-P atom. Involved in the biosynthesis of lipid A, a phosphorylated glycolipid that anchors the lipopolysaccharide to the outer membrane of the cell. The chain is UDP-2,3-diacylglucosamine hydrolase from Psychromonas ingrahamii (strain DSM 17664 / CCUG 51855 / 37).